A 320-amino-acid chain; its full sequence is Cytochrome c biogenesis protein CcsA (320 aa).

The next 7 helical transmembrane spans lie at 13–33 (ISFSVVSIVITIHFLTLFLLV), 46–66 (GMIVTFFCITGLLVTRWIYSG), 73–93 (LYESLIFLSWGFSLIHMVSYL), 147–167 (MVLGYAALLCGSLLSVALLVI), 226–246 (IISLGFIFLTIGILSGAVWAN), 259–274 (ETWAFITWTVFAIYFH), and 289–309 (VASMGFLIIWICYFGVNLLGI).

It belongs to the CcmF/CycK/Ccl1/NrfE/CcsA family. As to quaternary structure, may interact with Ccs1.

The protein resides in the plastid. Its subcellular location is the chloroplast thylakoid membrane. Its function is as follows. Required during biogenesis of c-type cytochromes (cytochrome c6 and cytochrome f) at the step of heme attachment. This chain is Cytochrome c biogenesis protein CcsA, found in Gossypium barbadense (Sea Island cotton).